Reading from the N-terminus, the 131-residue chain is Histone H2A type 1-A (131 aa).

A disordered region spans residues 1–23 (MSGRGKQGGKARAKSKSRSSRAG). Serine 2 carries the N-acetylserine modification. Residue serine 2 is modified to Phosphoserine; by RPS6KA5. Arginine 4 is modified (citrulline; alternate). At arginine 4 the chain carries Symmetric dimethylarginine; by PRMT5; alternate. The residue at position 6 (lysine 6) is an N6-(2-hydroxyisobutyryl)lysine. The segment covering 7–19 (QGGKARAKSKSRS) has biased composition (basic residues). Lysine 10 bears the N6-(2-hydroxyisobutyryl)lysine; alternate mark. Lysine 10 carries the post-translational modification N6-(beta-hydroxybutyryl)lysine; alternate. Lysine 10 is modified (N6-lactoyllysine; alternate). An N6-succinyllysine; alternate modification is found at lysine 10. The residue at position 14 (lysine 14) is an N6-(beta-hydroxybutyryl)lysine. Glycyl lysine isopeptide (Lys-Gly) (interchain with G-Cter in ubiquitin) cross-links involve residues lysine 14 and lysine 16. At lysine 37 the chain carries N6-(2-hydroxyisobutyryl)lysine; alternate. At lysine 37 the chain carries N6-(beta-hydroxybutyryl)lysine; alternate. N6-crotonyllysine; alternate is present on lysine 37. Lysine 75 and lysine 76 each carry N6-(2-hydroxyisobutyryl)lysine. Position 96 is an N6-(2-hydroxyisobutyryl)lysine; alternate (lysine 96). Lysine 96 bears the N6-(beta-hydroxybutyryl)lysine; alternate mark. N6-succinyllysine; alternate is present on lysine 96. Lysine 96 bears the N6-glutaryllysine; alternate mark. At glutamine 105 the chain carries N5-methylglutamine. Lysine 119 is subject to N6-(2-hydroxyisobutyryl)lysine; alternate. Lysine 119 is subject to N6-(beta-hydroxybutyryl)lysine; alternate. N6-crotonyllysine; alternate occurs at positions 119 and 120. 2 positions are modified to N6-glutaryllysine; alternate: lysine 119 and lysine 120. A Glycyl lysine isopeptide (Lys-Gly) (interchain with G-Cter in ubiquitin); alternate cross-link involves residue lysine 120. Threonine 121 carries the post-translational modification Phosphothreonine; by DCAF1. Position 127 is an N6-crotonyllysine (lysine 127).

This sequence belongs to the histone H2A family. As to quaternary structure, the nucleosome is a histone octamer containing two molecules each of H2A, H2B, H3 and H4 assembled in one H3-H4 heterotetramer and two H2A-H2B heterodimers. The octamer wraps approximately 147 bp of DNA. Deiminated on Arg-4 in granulocytes upon calcium entry. Post-translationally, monoubiquitination of Lys-120 (H2AK119Ub) by RING1, TRIM37 and RNF2/RING2 complex gives a specific tag for epigenetic transcriptional repression and participates in X chromosome inactivation of female mammals. It is involved in the initiation of both imprinted and random X inactivation. Ubiquitinated H2A is enriched in inactive X chromosome chromatin. Ubiquitination of H2A functions downstream of methylation of 'Lys-27' of histone H3 (H3K27me). H2AK119Ub by RNF2/RING2 can also be induced by ultraviolet and may be involved in DNA repair. Monoubiquitination of Lys-120 (H2AK119Ub) by TRIM37 may promote transformation of cells in a number of breast cancers. Following DNA double-strand breaks (DSBs), it is ubiquitinated through 'Lys-63' linkage of ubiquitin moieties by the E2 ligase UBE2N and the E3 ligases RNF8 and RNF168, leading to the recruitment of repair proteins to sites of DNA damage. Ubiquitination at Lys-14 and Lys-16 (H2AK13Ub and H2AK15Ub, respectively) in response to DNA damage is initiated by RNF168 that mediates monoubiquitination at these 2 sites, and 'Lys-63'-linked ubiquitin are then conjugated to monoubiquitin; RNF8 is able to extend 'Lys-63'-linked ubiquitin chains in vitro. Deubiquitinated by USP51 at Lys-14 and Lys-16 (H2AK13Ub and H2AK15Ub, respectively) after damaged DNA is repaired. H2AK119Ub and ionizing radiation-induced 'Lys-63'-linked ubiquitination (H2AK13Ub and H2AK15Ub) are distinct events. In terms of processing, phosphorylation on Ser-2 (H2AS1ph) is enhanced during mitosis. Phosphorylation on Ser-2 by RPS6KA5/MSK1 directly represses transcription. Acetylation of H3 inhibits Ser-2 phosphorylation by RPS6KA5/MSK1. Phosphorylation at Thr-121 (H2AT120ph) by DCAF1 is present in the regulatory region of many tumor suppresor genes and down-regulates their transcription. Glutamine methylation at Gln-105 (H2AQ104me) by FBL is specifically dedicated to polymerase I. It is present at 35S ribosomal DNA locus and impairs binding of the FACT complex. Post-translationally, symmetric dimethylation on Arg-4 by the PRDM1/PRMT5 complex may play a crucial role in the germ-cell lineage. In terms of processing, crotonylation (Kcr) is specifically present in male germ cells and marks testis-specific genes in post-meiotic cells, including X-linked genes that escape sex chromosome inactivation in haploid cells. Crotonylation marks active promoters and enhancers and confers resistance to transcriptional repressors. It is also associated with post-meiotically activated genes on autosomes. Lactylated in macrophages by EP300/P300 by using lactoyl-CoA directly derived from endogenous or exogenous lactate, leading to stimulates gene transcription.

The protein resides in the nucleus. It localises to the chromosome. Core component of nucleosome. Nucleosomes wrap and compact DNA into chromatin, limiting DNA accessibility to the cellular machineries which require DNA as a template. Histones thereby play a central role in transcription regulation, DNA repair, DNA replication and chromosomal stability. DNA accessibility is regulated via a complex set of post-translational modifications of histones, also called histone code, and nucleosome remodeling. This is Histone H2A type 1-A from Homo sapiens (Human).